Reading from the N-terminus, the 364-residue chain is tRNA 2-selenouridine synthase (364 aa).

Residues Leu14–Ile137 enclose the Rhodanese domain. The active-site S-selanylcysteine intermediate is the Cys97.

This sequence belongs to the SelU family. In terms of assembly, monomer.

It catalyses the reaction 5-methylaminomethyl-2-thiouridine(34) in tRNA + selenophosphate + (2E)-geranyl diphosphate + H2O + H(+) = 5-methylaminomethyl-2-selenouridine(34) in tRNA + (2E)-thiogeraniol + phosphate + diphosphate. The enzyme catalyses 5-methylaminomethyl-2-thiouridine(34) in tRNA + (2E)-geranyl diphosphate = 5-methylaminomethyl-S-(2E)-geranyl-thiouridine(34) in tRNA + diphosphate. The catalysed reaction is 5-methylaminomethyl-S-(2E)-geranyl-thiouridine(34) in tRNA + selenophosphate + H(+) = 5-methylaminomethyl-2-(Se-phospho)selenouridine(34) in tRNA + (2E)-thiogeraniol. It carries out the reaction 5-methylaminomethyl-2-(Se-phospho)selenouridine(34) in tRNA + H2O = 5-methylaminomethyl-2-selenouridine(34) in tRNA + phosphate. Functionally, involved in the post-transcriptional modification of the uridine at the wobble position (U34) of tRNA(Lys), tRNA(Glu) and tRNA(Gln). Catalyzes the conversion of 2-thiouridine (S2U-RNA) to 2-selenouridine (Se2U-RNA). Acts in a two-step process involving geranylation of 2-thiouridine (S2U) to S-geranyl-2-thiouridine (geS2U) and subsequent selenation of the latter derivative to 2-selenouridine (Se2U) in the tRNA chain. This chain is tRNA 2-selenouridine synthase, found in Escherichia coli O127:H6 (strain E2348/69 / EPEC).